Consider the following 127-residue polypeptide: Large ribosomal subunit protein bL12 (127 aa).

Belongs to the bacterial ribosomal protein bL12 family. Homodimer. Part of the ribosomal stalk of the 50S ribosomal subunit. Forms a multimeric L10(L12)X complex, where L10 forms an elongated spine to which 2 to 4 L12 dimers bind in a sequential fashion. Binds GTP-bound translation factors.

Forms part of the ribosomal stalk which helps the ribosome interact with GTP-bound translation factors. Is thus essential for accurate translation. The chain is Large ribosomal subunit protein bL12 from Desulforapulum autotrophicum (strain ATCC 43914 / DSM 3382 / VKM B-1955 / HRM2) (Desulfobacterium autotrophicum).